Here is a 68-residue protein sequence, read N- to C-terminus: conotoxin S11.3 (68 aa).

The first 26 residues, 1 to 26 (MMFRLTSVSCFLLVIVCLNLFQVVLT), serve as a signal peptide directing secretion. 4 disulfides stabilise this stretch: C29-C43, C36-C48, C42-C52, and C47-C56. Y60 is modified (tyrosine amide). Residues 64–68 (ATFQE) constitute a propeptide that is removed on maturation.

This sequence belongs to the conotoxin I2 superfamily. Expressed by the venom duct.

The protein localises to the secreted. This chain is conotoxin S11.3, found in Conus striatus (Striated cone).